A 728-amino-acid polypeptide reads, in one-letter code: Catalase-peroxidase (728 aa).

An N-terminal signal peptide occupies residues 1–16 (MDNPTDSAGKCPVAHG). The disordered stretch occupies residues 1–26 (MDNPTDSAGKCPVAHGNTPRSRSNRD). Positions 96–218 (WHSAGTYRIT…LGAVQMGFIY (123 aa)) form a cross-link, tryptophyl-tyrosyl-methioninium (Trp-Tyr) (with M-244). Catalysis depends on His97, which acts as the Proton acceptor. The tryptophyl-tyrosyl-methioninium (Tyr-Met) (with W-96) cross-link spans 218–244 (YVNPEGPNGNSDPLASARDIRETFARM). His259 is a binding site for heme b.

It belongs to the peroxidase family. Peroxidase/catalase subfamily. Homodimer or homotetramer. Heme b serves as cofactor. In terms of processing, formation of the three residue Trp-Tyr-Met cross-link is important for the catalase, but not the peroxidase activity of the enzyme.

The catalysed reaction is H2O2 + AH2 = A + 2 H2O. It carries out the reaction 2 H2O2 = O2 + 2 H2O. Its function is as follows. Bifunctional enzyme with both catalase and broad-spectrum peroxidase activity. This chain is Catalase-peroxidase, found in Rhizobium leguminosarum bv. phaseoli.